We begin with the raw amino-acid sequence, 365 residues long: Protein RecA (365 aa).

81-88 (GPESSGKT) provides a ligand contact to ATP.

It belongs to the RecA family.

Its subcellular location is the cytoplasm. Its function is as follows. Can catalyze the hydrolysis of ATP in the presence of single-stranded DNA, the ATP-dependent uptake of single-stranded DNA by duplex DNA, and the ATP-dependent hybridization of homologous single-stranded DNAs. It interacts with LexA causing its activation and leading to its autocatalytic cleavage. This chain is Protein RecA, found in Borreliella burgdorferi (strain ATCC 35210 / DSM 4680 / CIP 102532 / B31) (Borrelia burgdorferi).